The primary structure comprises 99 residues: Goannatyrotoxin-Vere1 (99 aa).

An N-terminal signal peptide occupies residues 1-28 (MIASMKPWPLVMVAALCILFCLGTLVDA). Y64 is modified (tyrosine amide). Residues 68-99 (SSPETLMSELIFGENSNSDHSSRSRFDDSYMW) constitute a propeptide, C-terminal extension.

This sequence belongs to the NPY family. In terms of tissue distribution, expressed by the mandibular venom gland.

The protein resides in the secreted. In terms of biological role, shows a potent unique triphasic action, rapid biphasic hypertension followed by prolonged hypotension. This Varanus eremius (Rusty desert monitor) protein is Goannatyrotoxin-Vere1.